A 257-amino-acid chain; its full sequence is Tryptophan synthase alpha chain (257 aa).

Active-site proton acceptor residues include glutamate 47 and aspartate 58.

This sequence belongs to the TrpA family. Tetramer of two alpha and two beta chains.

It catalyses the reaction (1S,2R)-1-C-(indol-3-yl)glycerol 3-phosphate + L-serine = D-glyceraldehyde 3-phosphate + L-tryptophan + H2O. It functions in the pathway amino-acid biosynthesis; L-tryptophan biosynthesis; L-tryptophan from chorismate: step 5/5. In terms of biological role, the alpha subunit is responsible for the aldol cleavage of indoleglycerol phosphate to indole and glyceraldehyde 3-phosphate. The protein is Tryptophan synthase alpha chain of Listeria welshimeri serovar 6b (strain ATCC 35897 / DSM 20650 / CCUG 15529 / CIP 8149 / NCTC 11857 / SLCC 5334 / V8).